The primary structure comprises 106 residues: Large ribosomal subunit protein bL21 (106 aa).

This sequence belongs to the bacterial ribosomal protein bL21 family. Part of the 50S ribosomal subunit. Contacts protein L20.

Its function is as follows. This protein binds to 23S rRNA in the presence of protein L20. This is Large ribosomal subunit protein bL21 from Streptomyces griseus subsp. griseus (strain JCM 4626 / CBS 651.72 / NBRC 13350 / KCC S-0626 / ISP 5235).